The sequence spans 301 residues: Heterogeneous nuclear ribonucleoprotein D-like (301 aa).

The segment at 1–29 (MEDATEMSGGAEEFAEGSKINASKNQQDD) is disordered. 2 consecutive RRM domains span residues 30 to 112 (GKMF…KGKE) and 115 to 194 (KKVF…QPKE). Disordered regions lie at residues 194-230 (EVYR…NWNQ) and 269-301 (GYGP…YQPY). Over residues 212–224 (GGRGGGRGRGRGQ) the composition is skewed to gly residues.

The protein resides in the nucleus. The protein localises to the cytoplasm. Functionally, acts as a transcriptional regulator. Binds DNA and RNA. In Gallus gallus (Chicken), this protein is Heterogeneous nuclear ribonucleoprotein D-like (HNRNPDL).